The chain runs to 201 residues: E3 ubiquitin-protein ligase MIR1 (201 aa).

The RING-CH-type zinc-finger motif lies at 1-58 (MDSTGEFCWICHQPEGPLKRFCGCKGSCAVSHQDCLRGWLETSRRQTCALCGTPYSMK). Residues 1 to 81 (MDSTGEFCWI…EEVLAAMEAC (81 aa)) are Cytoplasmic-facing. Zn(2+) contacts are provided by Cys-8, Cys-11, Cys-22, Cys-24, His-32, Cys-35, Cys-48, and Cys-51. Positions 52 to 79 (GTPYSMKWKTKPLREWTWGEEEVLAAME) are DIRT. A helical transmembrane segment spans residues 82–102 (LPLVLIPLAVLMIVMGTWLLV). At 103–113 (NHNGFLSPRMQ) the chain is on the extracellular side. The helical transmembrane segment at 114–134 (VVLVVIVLLAMIVFSASASYV) threads the bilayer. Over 135–201 (MVEGPGCLDT…RLGCVRLCCV (67 aa)) the chain is Cytoplasmic.

Interacts with host UBE2J2.

The protein resides in the host endoplasmic reticulum membrane. It carries out the reaction [E2 ubiquitin-conjugating enzyme]-S-ubiquitinyl-L-cysteine + [acceptor protein]-L-cysteine = [E2 ubiquitin-conjugating enzyme]-L-cysteine + [acceptor protein]-S-ubiquitinyl-L-cysteine.. The protein operates within protein modification; protein ubiquitination. In terms of biological role, E3 ubiquitin-protein ligase that mediates ubiquitination of host surface class I (MHC-I) H-2D(b)/H2-D1 and H-2K(b)/H2-K1 molecules before they exit the endoplasmic reticulum, leading to their degradation by the endoplasmic reticulum-associated degradation (ERAD) system, thus blocking the immune detection of virus-infected cells. Mediates ubiquitination of lysine, as well as serine and threonine residues present in the cytoplasmic tail of surface class I molecules. Promotes ubiquitination of hydroxylated serine or threonine residues via ester bonds instead of the classical isopeptide linkage. The polypeptide is E3 ubiquitin-protein ligase MIR1 (K3) (Murid herpesvirus 4 (MuHV-4)).